The primary structure comprises 250 residues: uncharacterized protein (250 aa).

4Fe-4S ferredoxin-type domains lie at 38-67 (KLLY…KAKV), 69-98 (KSAK…VIEG), 124-153 (KKYE…AVRR), 154-183 (KSIE…VERE), 191-220 (RDIE…QDGD), and 220-249 (DKVK…MWEK). Cysteine 47, cysteine 50, cysteine 53, cysteine 57, cysteine 78, cysteine 81, cysteine 84, cysteine 88, cysteine 133, cysteine 136, cysteine 139, cysteine 143, cysteine 163, cysteine 166, cysteine 169, cysteine 173, cysteine 200, cysteine 203, cysteine 206, cysteine 210, cysteine 229, cysteine 232, cysteine 235, and cysteine 239 together coordinate [4Fe-4S] cluster.

This is an uncharacterized protein from Methanocaldococcus jannaschii (strain ATCC 43067 / DSM 2661 / JAL-1 / JCM 10045 / NBRC 100440) (Methanococcus jannaschii).